A 335-amino-acid chain; its full sequence is Methionine import ATP-binding protein MetN 1 (335 aa).

The ABC transporter domain maps to 2–242; it reads IEFHNVHKTY…PQHPTTRRFV (241 aa). 38–45 is an ATP binding site; it reads GHSGAGKS.

The protein belongs to the ABC transporter superfamily. Methionine importer (TC 3.A.1.24) family. In terms of assembly, the complex is composed of two ATP-binding proteins (MetN), two transmembrane proteins (MetI) and a solute-binding protein (MetQ).

Its subcellular location is the cell inner membrane. It catalyses the reaction L-methionine(out) + ATP + H2O = L-methionine(in) + ADP + phosphate + H(+). It carries out the reaction D-methionine(out) + ATP + H2O = D-methionine(in) + ADP + phosphate + H(+). Its function is as follows. Part of the ABC transporter complex MetNIQ involved in methionine import. Responsible for energy coupling to the transport system. The protein is Methionine import ATP-binding protein MetN 1 of Pseudomonas savastanoi pv. phaseolicola (strain 1448A / Race 6) (Pseudomonas syringae pv. phaseolicola (strain 1448A / Race 6)).